Consider the following 143-residue polypeptide: 3-hydroxyacyl-[acyl-carrier-protein] dehydratase FabZ (143 aa).

The active site involves histidine 49.

Belongs to the thioester dehydratase family. FabZ subfamily.

Its subcellular location is the cytoplasm. The enzyme catalyses a (3R)-hydroxyacyl-[ACP] = a (2E)-enoyl-[ACP] + H2O. In terms of biological role, involved in unsaturated fatty acids biosynthesis. Catalyzes the dehydration of short chain beta-hydroxyacyl-ACPs and long chain saturated and unsaturated beta-hydroxyacyl-ACPs. The protein is 3-hydroxyacyl-[acyl-carrier-protein] dehydratase FabZ of Wolbachia pipientis wMel.